The following is a 399-amino-acid chain: uncharacterized protein (399 aa).

WD repeat units follow at residues glutamate 59–glutamine 99, glycine 102–threonine 141, glutamate 144–tyrosine 185, histidine 187–arginine 227, glutamate 241–serine 280, alanine 283–serine 322, proline 324–glutamate 363, and glycine 366–histidine 399.

The protein localises to the cytoplasm. It is found in the nucleus. This is an uncharacterized protein from Schizosaccharomyces pombe (strain 972 / ATCC 24843) (Fission yeast).